A 394-amino-acid chain; its full sequence is DNA replication and repair protein RecF (394 aa).

Position 30-37 (30-37 (GRNGFGKT)) interacts with ATP.

The protein belongs to the RecF family.

The protein resides in the cytoplasm. Its function is as follows. The RecF protein is involved in DNA metabolism; it is required for DNA replication and normal SOS inducibility. RecF binds preferentially to single-stranded, linear DNA. It also seems to bind ATP. This chain is DNA replication and repair protein RecF, found in Corynebacterium glutamicum (strain R).